A 421-amino-acid polypeptide reads, in one-letter code: MDLENKVKKMGLGHEQGFGAPCLKCKEKCEGFELHFWRKICRNCKCGQEEHDVLLSNEEDRKVGKLFEDTKYTTLIAKLKSDGIPMYKRNVMILTNPVAAKKNVSINTVTYEWAPPVHNQALARQYMQMLPKEKQPVAGSEGAQYRKKQLAKQLPAHDQDPSKCHELSPREVKEMEQFVKKYKSEALGVGDVKLPCEMDAQGPKQMYIPGGERSTPPAAGAMEDKSAEHKSTQYSCYCCKLSMKEGDPAIYAERAGYNKLWHPACFVCSICHELLVDMIYFWKNEKLYCGRHYCDSEKPRCAGCDELIFSNEYTQAENQNWHLKHFCCFDCDSILAGEIYVMVNDKPVCKPCYVKNHAVVCQGCHNAIDPEVQRVTYNNFSWHASTECFLCSCCSKCLIGQKFMPVEGMVFCSVECKKMMS.

The PET domain occupies 92 to 199; the sequence is MILTNPVAAK…GDVKLPCEMD (108 aa). Residues 133-164 form a disordered region; it reads EKQPVAGSEGAQYRKKQLAKQLPAHDQDPSKC. The span at 155–164 shows a compositional bias: basic and acidic residues; that stretch reads PAHDQDPSKC. 3 consecutive LIM zinc-binding domains span residues 234-297, 299-359, and 362-421; these read YSCY…CDSE, PRCA…NHAV, and QGCH…KMMS.

The protein belongs to the prickle / espinas / testin family. In terms of assembly, interacts via LIM domain 1 with ZYX. Interacts (via LIM domain 3) with ENAH and VASP. Interacts with ALKBH4, talin, actin, alpha-actinin, GRIP1 and PXN. Interacts (via LIM domain 2) with ACTL7A (via N-terminus). Heterodimer with ACTL7A; the heterodimer interacts with ENAH to form a heterotrimer.

The protein resides in the cytoplasm. Its subcellular location is the cell junction. It localises to the focal adhesion. Its function is as follows. Scaffold protein that may play a role in cell adhesion, cell spreading and in the reorganization of the actin cytoskeleton. Plays a role in the regulation of cell proliferation. May act as a tumor suppressor. The protein is Testin (TES) of Aotus nancymaae (Ma's night monkey).